The following is a 371-amino-acid chain: Phospho-N-acetylmuramoyl-pentapeptide-transferase (371 aa).

9 helical membrane-spanning segments follow: residues L19–G39, I48–P68, T95–A115, N119–F139, A155–L175, I180–I200, A227–F247, A284–V304, and V349–A369.

Belongs to the glycosyltransferase 4 family. MraY subfamily. Mg(2+) is required as a cofactor.

The protein resides in the cell inner membrane. The enzyme catalyses UDP-N-acetyl-alpha-D-muramoyl-L-alanyl-gamma-D-glutamyl-meso-2,6-diaminopimeloyl-D-alanyl-D-alanine + di-trans,octa-cis-undecaprenyl phosphate = di-trans,octa-cis-undecaprenyl diphospho-N-acetyl-alpha-D-muramoyl-L-alanyl-D-glutamyl-meso-2,6-diaminopimeloyl-D-alanyl-D-alanine + UMP. It functions in the pathway cell wall biogenesis; peptidoglycan biosynthesis. Catalyzes the initial step of the lipid cycle reactions in the biosynthesis of the cell wall peptidoglycan: transfers peptidoglycan precursor phospho-MurNAc-pentapeptide from UDP-MurNAc-pentapeptide onto the lipid carrier undecaprenyl phosphate, yielding undecaprenyl-pyrophosphoryl-MurNAc-pentapeptide, known as lipid I. This chain is Phospho-N-acetylmuramoyl-pentapeptide-transferase, found in Acaryochloris marina (strain MBIC 11017).